A 541-amino-acid polypeptide reads, in one-letter code: Chaperonin GroEL 2 (541 aa).

ATP-binding positions include 29–32 (TLGP), 86–90 (DGTTT), G413, 476–478 (NAA), and D492.

Belongs to the chaperonin (HSP60) family. In terms of assembly, forms a cylinder of 14 subunits composed of two heptameric rings stacked back-to-back. Interacts with the co-chaperonin GroES.

It localises to the cytoplasm. It carries out the reaction ATP + H2O + a folded polypeptide = ADP + phosphate + an unfolded polypeptide.. In terms of biological role, together with its co-chaperonin GroES, plays an essential role in assisting protein folding. The GroEL-GroES system forms a nano-cage that allows encapsulation of the non-native substrate proteins and provides a physical environment optimized to promote and accelerate protein folding. This chain is Chaperonin GroEL 2, found in Streptomyces avermitilis (strain ATCC 31267 / DSM 46492 / JCM 5070 / NBRC 14893 / NCIMB 12804 / NRRL 8165 / MA-4680).